The chain runs to 752 residues: RNA-directed RNA polymerase catalytic subunit (752 aa).

2 consecutive short sequence motifs (nuclear localization signal) follow at residues 187 to 195 (IKKKLPAKN) and 203 to 216 (RIPM…TRVE). The segment at 249-256 (RGFVLVVE) is promoter-binding site. The RdRp catalytic domain maps to 286–482 (VAKMLSNCPP…GINMSKKKSY (197 aa)).

The protein belongs to the influenza viruses polymerase PB1 family. In terms of assembly, influenza RNA polymerase is composed of three subunits: PB1, PB2 and PA. Interacts (via N-terminus) with PA (via C-terminus). Interacts (via C-terminus) with PB2 (via N-terminus); this interaction is essential for transcription initiation. In terms of processing, phosphorylated by host PRKCA.

Its subcellular location is the host nucleus. The protein localises to the host cytoplasm. It catalyses the reaction RNA(n) + a ribonucleoside 5'-triphosphate = RNA(n+1) + diphosphate. Functionally, RNA-dependent RNA polymerase which is responsible for replication and transcription of virus RNA segments. The transcription of viral mRNAs occurs by a unique mechanism called cap-snatching. 5' methylated caps of cellular mRNAs are cleaved after 10-13 nucleotides by PA. In turn, these short capped RNAs are used as primers by PB1 for transcription of viral mRNAs. During virus replication, PB1 initiates RNA synthesis and copy vRNA into complementary RNA (cRNA) which in turn serves as a template for the production of more vRNAs. The chain is RNA-directed RNA polymerase catalytic subunit from Homo sapiens (Human).